Here is a 673-residue protein sequence, read N- to C-terminus: Putative K(+)-stimulated pyrophosphate-energized sodium pump (673 aa).

A run of 5 helical transmembrane segments spans residues 3–23 (SFIVYSVLAGVIALIFAFMLS), 62–82 (IVIVTVILAIFVGWQTAACFI), 84–104 (GAIFSIFAGYFGMNVATKANV), 127–147 (VMGMSVVGLGVVGIGIMYYIF), and 154–174 (VTGFGLGASSIALFARVGGGI). Lys177 is a binding site for substrate. The Mg(2+) site is built by Asp180, Asp184, Asn207, and Asp210. Helical transmembrane passes span 222 to 242 (LFESYVGSIISALTLGTVVYA), 247 to 267 (VMFPLILSSIGIVASIIGILF), 279 to 299 (ALNTGTYIGGIIVIVSAAILS), 302 to 322 (IFGNLKAFFAVASGLVVGMII), 364 to 384 (LWPIVLISIGVLVSFFVMGGG), and 387 to 407 (AMVGLYGISLAAVGMLSTTGL). Asp419 contacts Mg(2+). 4 consecutive transmembrane segments (helical) span residues 449–469 (AAIGKGFAIGSAALTALSLFA), 486–506 (VTLVGLFIGAMLPFLFGALTM), 553–573 (EMILPGVLAIVVPVAMGLLLG), and 576–596 (ALGGLLAGALVSGVLVGILMS). Residues Asp603, Asp629, and Asp633 each coordinate Ca(2+). Lys636 lines the substrate pocket. Residues 652-672 (IVSLVFAPVVLQYGGILLNLI) form a helical membrane-spanning segment.

It belongs to the H(+)-translocating pyrophosphatase (TC 3.A.10) family. K(+)-stimulated subfamily. As to quaternary structure, homodimer. The cofactor is Mg(2+).

Its subcellular location is the cell membrane. The enzyme catalyses Na(+)(in) + diphosphate + H2O = Na(+)(out) + 2 phosphate + H(+). Its activity is regulated as follows. Requires K(+) for maximal activity. Functionally, sodium pump that utilizes the energy of pyrophosphate hydrolysis as the driving force for Na(+) movement across the membrane. The protein is Putative K(+)-stimulated pyrophosphate-energized sodium pump of Clostridium tetani (strain Massachusetts / E88).